Consider the following 194-residue polypeptide: Naphthalene 1,2-dioxygenase system, small oxygenase component (194 aa).

It belongs to the bacterial ring-hydroxylating dioxygenase beta subunit family. In terms of assembly, the naphthalene dioxygenase (NDO) multicomponent enzyme system is composed of an electron transfer component and a dioxygenase component (iron sulfur protein (ISP)). The electron transfer component is composed of a ferredoxin reductase (NdoR) and a ferredoxin (NdoA), and the dioxygenase component is formed of a heterohexamer (trimer of heterodimers) of three large alpha subunits (NdoB) and three small beta subunits (NdoC).

Its pathway is aromatic compound metabolism; naphthalene degradation. Functionally, component of the naphthalene dioxygenase (NDO) multicomponent enzyme system which catalyzes the incorporation of both atoms of molecular oxygen into naphthalene to form cis-(1R,2S)-dihydroxy-1,2-dihydronaphthalene. The beta subunit seems to have a structural role in the holoenzyme. Also able to catalyze the cis-dihydroxylation of biphenyl and phenanthrene. The protein is Naphthalene 1,2-dioxygenase system, small oxygenase component of Pseudomonas putida (Arthrobacter siderocapsulatus).